The sequence spans 110 residues: uncharacterized protein (110 aa).

2 disordered regions span residues 1 to 41 (MEWG…ERAQ) and 65 to 110 (LRQL…ASES). Residues 38 to 68 (ERAQQLLDAVEQRQRQLLDTIAACEEMLRQL) adopt a coiled-coil conformation.

This is an uncharacterized protein from Mus musculus (Mouse).